Consider the following 400-residue polypeptide: Diphosphomevalonate decarboxylase (400 aa).

(R)-5-diphosphomevalonate is bound by residues 25–28, arginine 80, 155–160, and threonine 211; these read YWGK and SGSACR.

The protein belongs to the diphosphomevalonate decarboxylase family. In terms of assembly, homodimer.

It localises to the cytoplasm. The enzyme catalyses (R)-5-diphosphomevalonate + ATP = isopentenyl diphosphate + ADP + phosphate + CO2. Its pathway is steroid biosynthesis; cholesterol biosynthesis. Functionally, catalyzes the ATP dependent decarboxylation of (R)-5-diphosphomevalonate to form isopentenyl diphosphate (IPP). Functions in the mevalonate (MVA) pathway leading to isopentenyl diphosphate (IPP), a key precursor for the biosynthesis of isoprenoids and sterol synthesis. This is Diphosphomevalonate decarboxylase (mvd) from Danio rerio (Zebrafish).